A 263-amino-acid polypeptide reads, in one-letter code: UPF0246 protein Strop_2927 (263 aa).

This sequence belongs to the UPF0246 family.

This is UPF0246 protein Strop_2927 from Salinispora tropica (strain ATCC BAA-916 / DSM 44818 / JCM 13857 / NBRC 105044 / CNB-440).